The following is a 198-amino-acid chain: Nucleoid occlusion factor SlmA (198 aa).

Residues 9 to 70 (RNRREEILQA…SLIEFIEDTL (62 aa)) form the HTH tetR-type domain. The segment at residues 33–52 (TTAKLAANVGVSEAALYRHF) is a DNA-binding region (H-T-H motif). The stretch at 117 to 144 (EQDRLQGRINQLFERIEAQLRQVLKERR) forms a coiled coil.

Belongs to the nucleoid occlusion factor SlmA family. In terms of assembly, homodimer. Interacts with FtsZ.

It is found in the cytoplasm. Its subcellular location is the nucleoid. Functionally, required for nucleoid occlusion (NO) phenomenon, which prevents Z-ring formation and cell division over the nucleoid. Acts as a DNA-associated cell division inhibitor that binds simultaneously chromosomal DNA and FtsZ, and disrupts the assembly of FtsZ polymers. SlmA-DNA-binding sequences (SBS) are dispersed on non-Ter regions of the chromosome, preventing FtsZ polymerization at these regions. The sequence is that of Nucleoid occlusion factor SlmA from Edwardsiella ictaluri (strain 93-146).